A 458-amino-acid chain; its full sequence is F-box/WD repeat-containing protein 9 (458 aa).

Met1 is subject to N-acetylmethionine. The disordered stretch occupies residues 1-28 (MELPPGPRDDPHAWDDDSDPELEPDTDA). Residues 16 to 28 (DDSDPELEPDTDA) show a composition bias toward acidic residues. A phosphoserine mark is found at Ser18 and Ser59. The region spanning 76-123 (VPGLLSLPPELLLEICAYLDARLVLHVLPRVCHALRDLVRDRVTWRLR) is the F-box domain. WD repeat units follow at residues 171 to 210 (GHFASIDSVLLLQGGTLCLSGSRDRNVNLWDLQQLGVEPS), 224 to 261 (THKGWVWSLAALDHRVCSGSWDSTVKLWDMAADGQQFG), 264 to 301 (KGKAAVLCLSYRPDILVTGTYDKKVTVYDPRVGPALLK), 305 to 342 (LHSSAVLALLADDRHIISGSEDHTLVVFDRRANSVLQR), 344 to 381 (QLDSYLLCMSYQEPQLWAGDNQGLLHVFANRSGCFQLV), 387 to 424 (GHRSQITGIKHSLGALYTTSTDKTIRVHVPTDPPRTIC), and 427 to 458 (SHHNVLNGICAEGNLVVAASGGLSLEVWRLQA).

Interacts with SKP1 and CUL1.

Substrate-recognition component of the SCF (SKP1-CUL1-F-box protein)-type E3 ubiquitin ligase complex. This is F-box/WD repeat-containing protein 9 (FBXW9) from Bos taurus (Bovine).